The primary structure comprises 210 residues: 2-dehydro-3-deoxy-phosphogluconate aldolase (210 aa).

E41 functions as the Proton acceptor in the catalytic mechanism. Residues R45, T69, and K129 each contribute to the pyruvate site. The active-site Schiff-base intermediate with substrate is K129.

It belongs to the KHG/KDPG aldolase family. Homotrimer.

The protein localises to the cytoplasm. The enzyme catalyses 2-dehydro-3-deoxy-6-phospho-D-gluconate = D-glyceraldehyde 3-phosphate + pyruvate. It participates in carbohydrate acid metabolism; 2-dehydro-3-deoxy-D-gluconate degradation; D-glyceraldehyde 3-phosphate and pyruvate from 2-dehydro-3-deoxy-D-gluconate: step 2/2. Functionally, catalyzes the reversible, stereospecific retro-aldol cleavage of 2-keto-3-deoxy-6-phosphogluconate (KDPG) to pyruvate and D-glyceraldehyde-3-phosphate. This is 2-dehydro-3-deoxy-phosphogluconate aldolase (eda) from Treponema pallidum (strain Nichols).